The following is a 392-amino-acid chain: Lipid-A-disaccharide synthase (392 aa).

The protein belongs to the LpxB family.

It catalyses the reaction a lipid X + a UDP-2-N,3-O-bis[(3R)-3-hydroxyacyl]-alpha-D-glucosamine = a lipid A disaccharide + UDP + H(+). It participates in bacterial outer membrane biogenesis; LPS lipid A biosynthesis. Condensation of UDP-2,3-diacylglucosamine and 2,3-diacylglucosamine-1-phosphate to form lipid A disaccharide, a precursor of lipid A, a phosphorylated glycolipid that anchors the lipopolysaccharide to the outer membrane of the cell. The sequence is that of Lipid-A-disaccharide synthase from Bradyrhizobium diazoefficiens (strain JCM 10833 / BCRC 13528 / IAM 13628 / NBRC 14792 / USDA 110).